We begin with the raw amino-acid sequence, 819 residues long: Zinc finger protein 658B (819 aa).

The C2H2-type 1; degenerate zinc-finger motif lies at 141 to 166 (YLSDEHGKCRKSFYWKAHLIQHERPH). 14 consecutive C2H2-type zinc fingers follow at residues 200–222 (YECNECGKAFCQNSNLSKHLRIH), 278–300 (YECIECGKTFSKTSHLRAHQRIH), 306–328 (YECVECEKTFSHKTHLSVHQRVH), 334–356 (YECNDCGKSFTYNSALRAHQRIH), 362–384 (YECSDCEKTFAHNSALRAHHRIH), 390–412 (YECNECGRSFAHISVLKAHQRIH), 418–440 (YECNECGRSFTYNSALRAHQRIH), 446–468 (YECSDCEKTFAHNSALKIHQRIH), 474–496 (YKCNECEKTFAHNSALRAHQNIH), 502–524 (YECSECGKTFFQKTRLSTHRRIH), 530–552 (YECSKCGKTFSQKSYLSGHERIH), 558–580 (YECNVCGKTFVYKAALIVHQRIH), 586–608 (YECNECGKTFSQRTHLCAHQRIH), and 614–636 (YECNECGKTFADNSALRAHHRIH). A C2H2-type 16; degenerate zinc finger spans residues 642 to 664 (YECNDCGKTFSKTSHLRAHLRTR). 5 consecutive C2H2-type zinc fingers follow at residues 670–692 (YECSECGKTFSEKSYVSAHQRVH), 698–720 (YECNVCGKPFAHNSTLRVHQRIH), 726–748 (YECNDCGKTFSQKSHLSAHQRIH), 754–776 (YECNECGKAFAQNSTLRVHQRIH), and 782–805 (YECDECGKTFVRKAALRVHHTRMH).

Belongs to the krueppel C2H2-type zinc-finger protein family.

The protein resides in the nucleus. Its function is as follows. May be involved in transcriptional regulation. This Homo sapiens (Human) protein is Zinc finger protein 658B (ZNF658B).